Reading from the N-terminus, the 147-residue chain is Protein phosphatase 1 regulatory subunit 14A (147 aa).

The span at 1-11 (MAAQRLGKRVL) shows a compositional bias: basic residues. Residues 1-37 (MAAQRLGKRVLSKLQSPSRARGPGGSPGGLQKRHARV) are disordered. Ser-26 is modified (phosphoserine). The segment at 35–120 (ARVTVKYDRR…LLVKLRGLHK (86 aa)) is inhibitory. Thr-38 carries the phosphothreonine modification. Positions 118–147 (LHKQPGLRQPSPSGDGSLSPRQDRARTAPP) are disordered. The span at 127-137 (PSPSGDGSLSP) shows a compositional bias: polar residues. Ser-128, Ser-134, and Ser-136 each carry phosphoserine. Residues 138 to 147 (RQDRARTAPP) show a composition bias toward basic and acidic residues.

The protein belongs to the PP1 inhibitor family. Post-translationally, phosphorylation of Thr-38 induces a conformation change. Detected in aorta smooth muscle and bladder.

The protein localises to the cytoplasm. Functionally, inhibitor of PPP1CA. Has over 1000-fold higher inhibitory activity when phosphorylated, creating a molecular switch for regulating the phosphorylation status of PPP1CA substrates and smooth muscle contraction. The chain is Protein phosphatase 1 regulatory subunit 14A (CPI17) from Sus scrofa (Pig).